The primary structure comprises 248 residues: Small ribosomal subunit protein uS2 (248 aa).

Belongs to the universal ribosomal protein uS2 family.

This is Small ribosomal subunit protein uS2 from Thiobacillus denitrificans (strain ATCC 25259 / T1).